The chain runs to 326 residues: N-acetyl-gamma-glutamyl-phosphate reductase (326 aa).

Residue Cys-155 is part of the active site.

It belongs to the NAGSA dehydrogenase family. Type 1 subfamily.

The protein localises to the cytoplasm. It carries out the reaction N-acetyl-L-glutamate 5-semialdehyde + phosphate + NADP(+) = N-acetyl-L-glutamyl 5-phosphate + NADPH + H(+). The protein operates within amino-acid biosynthesis; L-arginine biosynthesis; N(2)-acetyl-L-ornithine from L-glutamate: step 3/4. Catalyzes the NADPH-dependent reduction of N-acetyl-5-glutamyl phosphate to yield N-acetyl-L-glutamate 5-semialdehyde. The polypeptide is N-acetyl-gamma-glutamyl-phosphate reductase (Shewanella sediminis (strain HAW-EB3)).